The following is a 23-amino-acid chain: SLVELGKMILQETGKNPVTYGAY.

It belongs to the phospholipase A2 family. Group II subfamily. K49 sub-subfamily. Homodimer; non-covalently linked (probable alternative/compact dimer conformation in solution). As to expression, expressed by the venom gland.

The protein localises to the secreted. In terms of biological role, snake venom phospholipase A2 homolog that lacks enzymatic activity. Induces acute muscle damage after intramuscular injection in mice and disrupts negatively charged liposomes but not positively charged ones. Also exerts a weak anticoagulant effect only at concentrations of 40 ug/ml or higher. A model of myotoxic mechanism has been proposed: an apo Lys49-PLA2 is activated by the entrance of a hydrophobic molecule (e.g. fatty acid) at the hydrophobic channel of the protein leading to a reorientation of a monomer. This reorientation causes a transition between 'inactive' to 'active' states, causing alignment of C-terminal and membrane-docking sites (MDoS) side-by-side and putting the membrane-disruption sites (MDiS) in the same plane, exposed to solvent and in a symmetric position for both monomers. The MDoS region stabilizes the toxin on membrane by the interaction of charged residues with phospholipid head groups. Subsequently, the MDiS region destabilizes the membrane with penetration of hydrophobic residues. This insertion causes a disorganization of the membrane, allowing an uncontrolled influx of ions (i.e. calcium and sodium), and eventually triggering irreversible intracellular alterations and cell death. This Bothrops asper (Terciopelo) protein is Phospholipase A2 homolog 4.